The chain runs to 127 residues: Small ribosomal subunit protein uS12 (127 aa).

A 3-methylthioaspartic acid modification is found at aspartate 89.

This sequence belongs to the universal ribosomal protein uS12 family. In terms of assembly, part of the 30S ribosomal subunit. Contacts proteins S8 and S17. May interact with IF1 in the 30S initiation complex.

In terms of biological role, with S4 and S5 plays an important role in translational accuracy. Its function is as follows. Interacts with and stabilizes bases of the 16S rRNA that are involved in tRNA selection in the A site and with the mRNA backbone. Located at the interface of the 30S and 50S subunits, it traverses the body of the 30S subunit contacting proteins on the other side and probably holding the rRNA structure together. The combined cluster of proteins S8, S12 and S17 appears to hold together the shoulder and platform of the 30S subunit. The protein is Small ribosomal subunit protein uS12 of Akkermansia muciniphila (strain ATCC BAA-835 / DSM 22959 / JCM 33894 / BCRC 81048 / CCUG 64013 / CIP 107961 / Muc).